Here is a 357-residue protein sequence, read N- to C-terminus: DNA replication and repair protein RecF (357 aa).

Residue 30–37 (GANGSGKT) coordinates ATP.

It belongs to the RecF family.

It localises to the cytoplasm. In terms of biological role, the RecF protein is involved in DNA metabolism; it is required for DNA replication and normal SOS inducibility. RecF binds preferentially to single-stranded, linear DNA. It also seems to bind ATP. The chain is DNA replication and repair protein RecF from Salmonella schwarzengrund (strain CVM19633).